The primary structure comprises 108 residues: Nucleoid-associated protein HCH_02614 (108 aa).

The protein belongs to the YbaB/EbfC family. As to quaternary structure, homodimer.

The protein resides in the cytoplasm. The protein localises to the nucleoid. In terms of biological role, binds to DNA and alters its conformation. May be involved in regulation of gene expression, nucleoid organization and DNA protection. This chain is Nucleoid-associated protein HCH_02614, found in Hahella chejuensis (strain KCTC 2396).